Consider the following 140-residue polypeptide: Large ribosomal subunit protein uL16 (140 aa).

Belongs to the universal ribosomal protein uL16 family. Part of the 50S ribosomal subunit.

In terms of biological role, binds 23S rRNA and is also seen to make contacts with the A and possibly P site tRNAs. The protein is Large ribosomal subunit protein uL16 of Cytophaga hutchinsonii (strain ATCC 33406 / DSM 1761 / CIP 103989 / NBRC 15051 / NCIMB 9469 / D465).